Here is a 342-residue protein sequence, read N- to C-terminus: Cell division protein FtsQ (342 aa).

Residues 1-80 (MDGAGSLTRS…ALVERYLPRR (80 aa)) lie on the Cytoplasmic side of the membrane. Residues 81–99 (VGISMTVLLLIGSCGFGIV) traverse the membrane as a helical segment. The Periplasmic segment spans residues 100–342 (KGGHLQDFVT…KKKKKAGDAA (243 aa)). The 69-residue stretch at 124-192 (FRITSVVING…GQLMIELTER (69 aa)) folds into the POTRA domain.

It belongs to the FtsQ/DivIB family. FtsQ subfamily.

Its subcellular location is the cell inner membrane. In terms of biological role, essential cell division protein. The polypeptide is Cell division protein FtsQ (Bradyrhizobium diazoefficiens (strain JCM 10833 / BCRC 13528 / IAM 13628 / NBRC 14792 / USDA 110)).